Reading from the N-terminus, the 292-residue chain is High-affinity heme uptake system protein IsdE (292 aa).

An N-terminal signal peptide occupies residues 1–19 (MRIIKYLTILVISVVILTS). Residue Cys20 is the site of N-palmitoyl cysteine attachment. Residue Cys20 is the site of S-diacylglycerol cysteine attachment. Residues 35 to 291 (RIVPTTVALT…QLYDLFYKDK (257 aa)) enclose the Fe/B12 periplasmic-binding domain. 6 residues coordinate heme: Val41, Ala42, Ser60, Tyr61, Met78, and His229.

Belongs to the bacterial solute-binding protein 8 family. Heme b serves as cofactor.

Its subcellular location is the cell membrane. Involved in heme (porphyrin) scavenging. Binds Fe(2+) and Fe(3+) heme but the largest fraction is Fe(2+) heme. Functions as a high-affinity heme binding protein and probably has a role in relaying heme-iron from cell wall-anchored isd proteins receptors to the probable permease IsdF. The sequence is that of High-affinity heme uptake system protein IsdE (isdE) from Staphylococcus aureus (strain bovine RF122 / ET3-1).